A 229-amino-acid chain; its full sequence is Putative N-acetylmannosamine-6-phosphate 2-epimerase (229 aa).

It belongs to the NanE family.

It catalyses the reaction an N-acyl-D-glucosamine 6-phosphate = an N-acyl-D-mannosamine 6-phosphate. It participates in amino-sugar metabolism; N-acetylneuraminate degradation; D-fructose 6-phosphate from N-acetylneuraminate: step 3/5. In terms of biological role, converts N-acetylmannosamine-6-phosphate (ManNAc-6-P) to N-acetylglucosamine-6-phosphate (GlcNAc-6-P). The protein is Putative N-acetylmannosamine-6-phosphate 2-epimerase of Haemophilus ducreyi (strain 35000HP / ATCC 700724).